Reading from the N-terminus, the 42-residue chain is Capsid protein G8P (42 aa).

Topologically, residues 1 to 12 (MGDILTGVSGAE) are periplasmic. A helical membrane pass occupies residues 13 to 34 (AATAMIAAAAIIALVGFTKWGA). The Cytoplasmic portion of the chain corresponds to 35 to 42 (KKVASFFG).

Belongs to the inovirus capsid protein family. In terms of assembly, homomultimerizes. There are several thousands of this protein in the phage capsid.

The protein resides in the virion. It localises to the host membrane. In terms of biological role, self assembles to form a helical capsid wrapping up the viral genomic DNA. The capsid displays a filamentous structure with a length of 760-1950 nm and a width of 6-8 nm. The virion assembly and budding take place at the host inner membrane. In Xanthomonas phage phiLf (Bacteriophage phi-Lf), this protein is Capsid protein G8P (VIII).